A 277-amino-acid chain; its full sequence is Large ribosomal subunit protein uL2 (277 aa).

The interval 218 to 277 is disordered; the sequence is PTVRGSVMNPNDHPHGGGEGKSPIGHPSPLTPWGKPALGYKTRKNKKYSDGMIIKRRGQK.

The protein belongs to the universal ribosomal protein uL2 family. In terms of assembly, part of the 50S ribosomal subunit. Forms a bridge to the 30S subunit in the 70S ribosome.

In terms of biological role, one of the primary rRNA binding proteins. Required for association of the 30S and 50S subunits to form the 70S ribosome, for tRNA binding and peptide bond formation. It has been suggested to have peptidyltransferase activity; this is somewhat controversial. Makes several contacts with the 16S rRNA in the 70S ribosome. The polypeptide is Large ribosomal subunit protein uL2 (Clostridium novyi (strain NT)).